The following is a 127-amino-acid chain: Large ribosomal subunit protein uL22 (127 aa).

This sequence belongs to the universal ribosomal protein uL22 family. Part of the 50S ribosomal subunit.

In terms of biological role, this protein binds specifically to 23S rRNA; its binding is stimulated by other ribosomal proteins, e.g. L4, L17, and L20. It is important during the early stages of 50S assembly. It makes multiple contacts with different domains of the 23S rRNA in the assembled 50S subunit and ribosome. Its function is as follows. The globular domain of the protein is located near the polypeptide exit tunnel on the outside of the subunit, while an extended beta-hairpin is found that lines the wall of the exit tunnel in the center of the 70S ribosome. This is Large ribosomal subunit protein uL22 from Methylobacterium sp. (strain 4-46).